We begin with the raw amino-acid sequence, 616 residues long: Chaperone protein HscA (616 aa).

Belongs to the heat shock protein 70 family.

Functionally, chaperone involved in the maturation of iron-sulfur cluster-containing proteins. Has a low intrinsic ATPase activity which is markedly stimulated by HscB. Involved in the maturation of IscU. This Escherichia coli O17:K52:H18 (strain UMN026 / ExPEC) protein is Chaperone protein HscA.